A 70-amino-acid polypeptide reads, in one-letter code: Large ribosomal subunit protein uL29 (70 aa).

This sequence belongs to the universal ribosomal protein uL29 family.

The sequence is that of Large ribosomal subunit protein uL29 from Clostridium botulinum (strain Alaska E43 / Type E3).